The following is an 811-amino-acid chain: Glycerol-3-phosphate acyltransferase (811 aa).

Positions Cys303–Met308 match the HXXXXD motif motif.

This sequence belongs to the GPAT/DAPAT family.

It is found in the cell inner membrane. The catalysed reaction is sn-glycerol 3-phosphate + an acyl-CoA = a 1-acyl-sn-glycero-3-phosphate + CoA. It participates in phospholipid metabolism; CDP-diacylglycerol biosynthesis; CDP-diacylglycerol from sn-glycerol 3-phosphate: step 1/3. This is Glycerol-3-phosphate acyltransferase from Glaesserella parasuis serovar 5 (strain SH0165) (Haemophilus parasuis).